A 125-amino-acid polypeptide reads, in one-letter code: Small ribosomal subunit protein uS12 (125 aa).

A disordered region spans residues 9-31; that stretch reads RQGREVEKIKSKSPAMENSPQRR. Asp89 carries the post-translational modification 3-methylthioaspartic acid. Positions 106–125 are disordered; the sequence is GVKDRKQSRSKYGAKRPKKA. Over residues 113-125 the composition is skewed to basic residues; the sequence is SRSKYGAKRPKKA.

It belongs to the universal ribosomal protein uS12 family. In terms of assembly, part of the 30S ribosomal subunit. Contacts proteins S8 and S17. May interact with IF1 in the 30S initiation complex.

Its function is as follows. With S4 and S5 plays an important role in translational accuracy. Interacts with and stabilizes bases of the 16S rRNA that are involved in tRNA selection in the A site and with the mRNA backbone. Located at the interface of the 30S and 50S subunits, it traverses the body of the 30S subunit contacting proteins on the other side and probably holding the rRNA structure together. The combined cluster of proteins S8, S12 and S17 appears to hold together the shoulder and platform of the 30S subunit. This chain is Small ribosomal subunit protein uS12, found in Polaromonas sp. (strain JS666 / ATCC BAA-500).